Reading from the N-terminus, the 227-residue chain is Triosephosphate isomerase (227 aa).

6–8 (NLK) provides a ligand contact to substrate. H85 (electrophile) is an active-site residue. Catalysis depends on E152, which acts as the Proton acceptor. Substrate contacts are provided by G158 and S188.

The protein belongs to the triosephosphate isomerase family. Homodimer.

Its subcellular location is the cytoplasm. The enzyme catalyses D-glyceraldehyde 3-phosphate = dihydroxyacetone phosphate. It functions in the pathway carbohydrate biosynthesis; gluconeogenesis. Its pathway is carbohydrate degradation; glycolysis; D-glyceraldehyde 3-phosphate from glycerone phosphate: step 1/1. Functionally, involved in the gluconeogenesis. Catalyzes stereospecifically the conversion of dihydroxyacetone phosphate (DHAP) to D-glyceraldehyde-3-phosphate (G3P). In Campylobacter concisus (strain 13826), this protein is Triosephosphate isomerase.